A 309-amino-acid polypeptide reads, in one-letter code: Golgi to ER traffic protein 4 homolog (309 aa).

Residues 290 to 309 are disordered; the sequence is SGGGLASMEVDGPTIEDEMD.

Belongs to the GET4 family.

In terms of biological role, may play a role in insertion of tail-anchored proteins into the endoplasmic reticulum membrane. The sequence is that of Golgi to ER traffic protein 4 homolog from Dictyostelium discoideum (Social amoeba).